The primary structure comprises 367 residues: MSSPRQTPLHEIHEALGATFTEFAGWRMPLRYTGDAAEHNAVRTAAGLFDLTHMGEIRISGPQAPEALDYALVANASAITVGRARYTMICNSEGGVLDDLIVYRLGEQEYLVVANAANAAVVSAELAERVARFEASHEDVSDDYALIAVQGPKAVDILAPLTSTDLSTVKYYAGYRSEVAGARVMLARTGYTGEDGFELFTSPADAPAVWQALADSGAEHGLRPAGLSCRDTLRLEAGMPLYGNELSAELTPFHANLGRVVKLDKPGDFVGKAPLAAAAEKPTERKLVGLRTDQRRAPRHGYRVLDAGGAEIGVVTSGAPSPTLGHPIAMAYVDRDHAEPGTALQVDIRGTAVPVEVVALPFYRRNA.

This sequence belongs to the GcvT family. As to quaternary structure, the glycine cleavage system is composed of four proteins: P, T, L and H.

The enzyme catalyses N(6)-[(R)-S(8)-aminomethyldihydrolipoyl]-L-lysyl-[protein] + (6S)-5,6,7,8-tetrahydrofolate = N(6)-[(R)-dihydrolipoyl]-L-lysyl-[protein] + (6R)-5,10-methylene-5,6,7,8-tetrahydrofolate + NH4(+). In terms of biological role, the glycine cleavage system catalyzes the degradation of glycine. The chain is Aminomethyltransferase from Saccharopolyspora erythraea (strain ATCC 11635 / DSM 40517 / JCM 4748 / NBRC 13426 / NCIMB 8594 / NRRL 2338).